Reading from the N-terminus, the 408-residue chain is MIRYISAMPSPEWEHETPRTLALLGSTGSIGTSALRVVEAHPHRFKVVALAGARNVEKLAAQAARWRPEHLGVLDATGAAKLRDLLPAGYAPHIHIGPEGYATMATLPEAGTVLSAQVGAAGLRATEAAARHGKVICLANKESLVLAGDIIRRHCAGSGAVILPVDSEHNAIFQALQGHDPASVRRIILTASGGPFRGRSRDDLAAVSCRDALAHPNWNMGAKISIDSATLMNKGLEVIEACHLYGVGIDDVGVVVHPQSIVHSLVEYEDGSQIAHLGTPDMRIAIAYCLTWPGVVDAGVPRLDLVKAGSLTFEEPDLHSFPCLELARRAYREGRGMPVVLNAANEVAVSLFLSDRIRFLDIPDIIARALDMHDGTTPHDIEGIEALDEATRRTVYERAGHSNTDGMA.

Residues Thr-27, Gly-28, Ser-29, Ile-30, Ala-53, Arg-54, Asn-55, and Asn-140 each coordinate NADPH. Lys-141 contributes to the 1-deoxy-D-xylulose 5-phosphate binding site. Residue Glu-142 coordinates NADPH. Residue Asp-166 coordinates Mn(2+). 1-deoxy-D-xylulose 5-phosphate-binding residues include Ser-167, Glu-168, Ser-192, and His-215. Glu-168 is a Mn(2+) binding site. Gly-221 provides a ligand contact to NADPH. Residues Ser-228, Asn-233, Lys-234, and Glu-237 each contribute to the 1-deoxy-D-xylulose 5-phosphate site. A Mn(2+)-binding site is contributed by Glu-237.

The protein belongs to the DXR family. It depends on Mg(2+) as a cofactor. Mn(2+) serves as cofactor.

It catalyses the reaction 2-C-methyl-D-erythritol 4-phosphate + NADP(+) = 1-deoxy-D-xylulose 5-phosphate + NADPH + H(+). It participates in isoprenoid biosynthesis; isopentenyl diphosphate biosynthesis via DXP pathway; isopentenyl diphosphate from 1-deoxy-D-xylulose 5-phosphate: step 1/6. Catalyzes the NADPH-dependent rearrangement and reduction of 1-deoxy-D-xylulose-5-phosphate (DXP) to 2-C-methyl-D-erythritol 4-phosphate (MEP). The sequence is that of 1-deoxy-D-xylulose 5-phosphate reductoisomerase from Nitratidesulfovibrio vulgaris (strain ATCC 29579 / DSM 644 / CCUG 34227 / NCIMB 8303 / VKM B-1760 / Hildenborough) (Desulfovibrio vulgaris).